Consider the following 146-residue polypeptide: D-aminoacyl-tRNA deacylase (146 aa).

The Gly-cisPro motif, important for rejection of L-amino acids signature appears at 137–138; the sequence is GP.

Belongs to the DTD family. Homodimer.

Its subcellular location is the cytoplasm. It catalyses the reaction glycyl-tRNA(Ala) + H2O = tRNA(Ala) + glycine + H(+). It carries out the reaction a D-aminoacyl-tRNA + H2O = a tRNA + a D-alpha-amino acid + H(+). In terms of biological role, an aminoacyl-tRNA editing enzyme that deacylates mischarged D-aminoacyl-tRNAs. Also deacylates mischarged glycyl-tRNA(Ala), protecting cells against glycine mischarging by AlaRS. Acts via tRNA-based rather than protein-based catalysis; rejects L-amino acids rather than detecting D-amino acids in the active site. By recycling D-aminoacyl-tRNA to D-amino acids and free tRNA molecules, this enzyme counteracts the toxicity associated with the formation of D-aminoacyl-tRNA entities in vivo and helps enforce protein L-homochirality. This Bacillus cereus (strain Q1) protein is D-aminoacyl-tRNA deacylase.